Reading from the N-terminus, the 487-residue chain is MTITPQQLIAMLPLLIVGLTVVVVMLSIAWRRDHFINATLTVIGLNLALLSLYFVGQVGPMDVTPLMRVDGYSMFYTGLVIIASLATSTFAYPWLVGYPDNREEFYLLVLIAALGGILLASANHLASLFLGIELLTLPLFGLIGYAYRQKRSLEASIKYMLLSAAASSFLLFGMALLYAESGSLSFVGLGQSLSDSMVHQPLILAGLGMMIVGLGFKLSLVPFQLWTPDVYQGAPAPVSTFLATASKIAIFAVVMRLFMYAPAADSEAVRLVLSIIAVASILFGNLMAISQTNIKRLLGYSSIAHLGYLLIALVAVQTHELALPLETIGVYLAGYLFSSLGAFGVVSLMSSPYKGPDAESLFSYRGLFWHKPILSAVMTVMMLSLAGIPMTLGFIGKFFVVAMGVSANLWWLTGAVVLGSAIGLYYYLRVTVSLFLSPPQSLVRDTPSNWALTAGGVVVLISAILVLVLGIYPQPLITLVQMAQPLM.

14 helical membrane-spanning segments follow: residues 8-28, 35-55, 78-98, 104-124, 125-145, 159-179, 203-223, 235-255, 271-291, 297-317, 328-348, 376-396, 409-428, and 451-471; these read LIAM…MLSI, FINA…LYFV, GLVI…LVGY, EFYL…SANH, LASL…LIGY, YMLL…LLYA, ILAG…LVPF, PAPV…AVVM, LVLS…AISQ, LLGY…VAVQ, IGVY…VVSL, AVMT…GFIG, LWWL…YYYL, and ALTA…VLGI.

It belongs to the complex I subunit 2 family. NDH-1 is composed of 13 different subunits. Subunits NuoA, H, J, K, L, M, N constitute the membrane sector of the complex.

It is found in the cell inner membrane. The catalysed reaction is a quinone + NADH + 5 H(+)(in) = a quinol + NAD(+) + 4 H(+)(out). In terms of biological role, NDH-1 shuttles electrons from NADH, via FMN and iron-sulfur (Fe-S) centers, to quinones in the respiratory chain. The immediate electron acceptor for the enzyme in this species is believed to be ubiquinone. Couples the redox reaction to proton translocation (for every two electrons transferred, four hydrogen ions are translocated across the cytoplasmic membrane), and thus conserves the redox energy in a proton gradient. The protein is NADH-quinone oxidoreductase subunit N of Yersinia pseudotuberculosis serotype O:1b (strain IP 31758).